Here is a 556-residue protein sequence, read N- to C-terminus: 2-succinyl-5-enolpyruvyl-6-hydroxy-3-cyclohexene-1-carboxylate synthase (556 aa).

This sequence belongs to the TPP enzyme family. MenD subfamily. In terms of assembly, homodimer. The cofactor is Mg(2+). Mn(2+) serves as cofactor. Thiamine diphosphate is required as a cofactor.

The enzyme catalyses isochorismate + 2-oxoglutarate + H(+) = 5-enolpyruvoyl-6-hydroxy-2-succinyl-cyclohex-3-ene-1-carboxylate + CO2. It functions in the pathway quinol/quinone metabolism; 1,4-dihydroxy-2-naphthoate biosynthesis; 1,4-dihydroxy-2-naphthoate from chorismate: step 2/7. The protein operates within quinol/quinone metabolism; menaquinone biosynthesis. Its function is as follows. Catalyzes the thiamine diphosphate-dependent decarboxylation of 2-oxoglutarate and the subsequent addition of the resulting succinic semialdehyde-thiamine pyrophosphate anion to isochorismate to yield 2-succinyl-5-enolpyruvyl-6-hydroxy-3-cyclohexene-1-carboxylate (SEPHCHC). In Staphylococcus epidermidis (strain ATCC 12228 / FDA PCI 1200), this protein is 2-succinyl-5-enolpyruvyl-6-hydroxy-3-cyclohexene-1-carboxylate synthase.